We begin with the raw amino-acid sequence, 225 residues long: Ras-related protein Rab-32 (225 aa).

Alanine 2 carries the post-translational modification N-acetylalanine. Residues valine 36, glycine 37, lysine 38, threonine 39, serine 40, serine 51, glutamine 52, tyrosine 54, and threonine 57 each contribute to the GTP site. Threonine 39 serves as a coordination point for Mg(2+). A Switch 1 motif is present at residues 48–62 (QLFSQHYRATIGVDF). Mg(2+) is bound at residue threonine 57. Serine 71 is modified (phosphoserine). Aspartate 81 lines the Mg(2+) pocket. GTP-binding residues include glycine 84, asparagine 143, lysine 144, aspartate 146, alanine 175, and lysine 176. The Switch 2 motif lies at 84 to 97 (GQERFGNMTRVYYK). Residues 178 to 197 (NINIEEAARFLVEKILVNHQ) are PKA-RII subunit binding domain. 2 S-geranylgeranyl cysteine lipidation sites follow: cysteine 224 and cysteine 225.

The protein belongs to the small GTPase superfamily. Rab family. Interacts with ANKRD27. A decreased interaction with ANKRD27 seen in the presence of SGSM2. Interacts with LRRK2 (via N-terminus); this interaction results in stimulation of RAB10 phosphorylation by LRRK2. It depends on Mg(2+) as a cofactor. Widely expressed with high levels in heart, liver, kidney, bone marrow, testis, colon and fetal lung.

Its subcellular location is the mitochondrion. The protein localises to the mitochondrion outer membrane. It is found in the cytoplasmic vesicle. It localises to the phagosome. The protein resides in the phagosome membrane. Its subcellular location is the melanosome. The protein localises to the melanosome membrane. It carries out the reaction GTP + H2O = GDP + phosphate + H(+). Its activity is regulated as follows. Regulated by guanine the nucleotide exchange factor (GEF) BLOC-3 complex composed of HPS1 and HPS4 which promote the exchange of bound GDP for free GTP. Regulated by the GTPase activating protein (GAP) SGSM2/RUTBC1 which increases the GTP hydrolysis activity. Inhibited by GDP dissociation inhibitors (GDIs) which prevent Rab-GDP dissociation. Functionally, the small GTPases Rab are key regulators of intracellular membrane trafficking, from the formation of transport vesicles to their fusion with membranes. Rabs cycle between an inactive GDP-bound form and an active GTP-bound form that is able to recruit to membranes different set of downstream effectors directly responsible for vesicle formation, movement, tethering and fusion. Also acts as an A-kinase anchoring protein by binding to the type II regulatory subunit of protein kinase A and anchoring it to the mitochondrion. Also involved in synchronization of mitochondrial fission. Plays a role in the maturation of phagosomes that engulf pathogens, such as S.aureus and M.tuberculosis. Plays an important role in the control of melanin production and melanosome biogenesis. In concert with RAB38, regulates the proper trafficking of melanogenic enzymes TYR, TYRP1 and DCT/TYRP2 to melanosomes in melanocytes. Stimulates phosphorylation of RAB10 'Thr-73' by LRRK2. The chain is Ras-related protein Rab-32 from Homo sapiens (Human).